The primary structure comprises 418 residues: Actin-like protein 7B (418 aa).

Positions 1–42 are disordered; that stretch reads MATKNSPSPKPMGTAQGDPGEAGTLPAPEAAGIRDTGSTQLK. At Ser-8 the chain carries Phosphoserine.

The protein belongs to the actin family. As to expression, testis specific.

The protein resides in the cytoplasm. Its subcellular location is the cytoskeleton. This chain is Actin-like protein 7B (Actl7b), found in Mus musculus (Mouse).